Here is a 499-residue protein sequence, read N- to C-terminus: Glycerol kinase (499 aa).

An ADP-binding site is contributed by T13. Residues T13, T14, and S15 each contribute to the ATP site. Residue T13 participates in sn-glycerol 3-phosphate binding. An ADP-binding site is contributed by R17. Residues R83, E84, Y135, and D245 each coordinate sn-glycerol 3-phosphate. Residues R83, E84, Y135, D245, and Q246 each contribute to the glycerol site. 2 residues coordinate ADP: T267 and G310. 4 residues coordinate ATP: T267, G310, Q314, and G411. ADP-binding residues include G411 and N415.

Belongs to the FGGY kinase family.

The enzyme catalyses glycerol + ATP = sn-glycerol 3-phosphate + ADP + H(+). Its pathway is polyol metabolism; glycerol degradation via glycerol kinase pathway; sn-glycerol 3-phosphate from glycerol: step 1/1. Inhibited by fructose 1,6-bisphosphate (FBP). Key enzyme in the regulation of glycerol uptake and metabolism. Catalyzes the phosphorylation of glycerol to yield sn-glycerol 3-phosphate. The polypeptide is Glycerol kinase (Xanthomonas euvesicatoria pv. vesicatoria (strain 85-10) (Xanthomonas campestris pv. vesicatoria)).